The sequence spans 166 residues: Glutamyl-tRNA(Gln) amidotransferase subunit C-2, mitochondrial (166 aa).

Belongs to the GatC family. Subunit of the heterotrimeric GatCAB amidotransferase (AdT) complex, composed of A, B and C subunits.

The protein resides in the mitochondrion. The catalysed reaction is L-glutamyl-tRNA(Gln) + L-glutamine + ATP + H2O = L-glutaminyl-tRNA(Gln) + L-glutamate + ADP + phosphate + H(+). Allows the formation of correctly charged Gln-tRNA(Gln) through the transamidation of misacylated Glu-tRNA(Gln) in the mitochondria. The reaction takes place in the presence of glutamine and ATP through an activated gamma-phospho-Glu-tRNA(Gln). The protein is Glutamyl-tRNA(Gln) amidotransferase subunit C-2, mitochondrial of Culex quinquefasciatus (Southern house mosquito).